The sequence spans 52 residues: Phospholamban (52 aa).

Methionine 1 carries the N-acetylmethionine modification. Residues 1-31 are Cytoplasmic-facing; sequence MEKVQYLTRSAIRRASTIEMPQQARQKLQNL. Position 16 is a phosphoserine; by PKA and DMPK (serine 16). The segment at 16-22 is involved in HAX1 binding; that stretch reads STIEMPQ. Residue threonine 17 is modified to Phosphothreonine; by CaMK2. The chain crosses the membrane as a helical span at residues 32–52; the sequence is FINFCLILICLLLICIIVMLL. The S-palmitoyl cysteine moiety is linked to residue cysteine 36.

This sequence belongs to the phospholamban family. In terms of assembly, homopentamer. Can also form heterooligomers with other sarcoplasmic/endoplasmic reticulum calcium ATPase (SERCA) regulators ARLN, ERLN, SLN and STRIT1/DWORF. Monomer. Interacts with HAX1. Interacts as a monomer with ATP2A2; the interaction decreases ATP2A2 Ca(2+) affinity. Interacts with VMP1; VMP1 competes with PLN and SLN to prevent them from forming an inhibitory complex with ATP2A2. Interacts with S100A1 in a Ca(2+)-dependent manner. In terms of processing, phosphorylation by PKA abolishes the inhibition of ATP2A2-mediated calcium uptake. Phosphorylated at Thr-17 by CaMK2, and in response to beta-adrenergic stimulation. Phosphorylation by DMPK may stimulate sarcoplasmic reticulum calcium uptake in cardiomyocytes. Post-translationally, palmitoylated by ZDHHC16, promoting formation of the homopentamer. In elongated spermatids, proteolytically cleaved by SPPL2C which modulates intracellular Ca(2+) homeostasis. In terms of tissue distribution, heart muscle (at protein level).

It localises to the endoplasmic reticulum membrane. It is found in the sarcoplasmic reticulum membrane. Its subcellular location is the mitochondrion membrane. The protein localises to the membrane. Functionally, reversibly inhibits the activity of ATP2A2/SERCA2 in cardiac sarcoplasmic reticulum by decreasing the apparent affinity of the ATPase for Ca(2+). Binds preferentially to the ATP-bound E1 conformational form of ATP2A2 which predominates at low Ca(2+) concentrations during the diastolic phase of the cardiac cycle. Inhibits ATP2A2 Ca(2+) affinity by disrupting its allosteric activation by ATP. Modulates the contractility of the heart muscle in response to physiological stimuli via its effects on ATP2A2. Modulates calcium re-uptake during muscle relaxation and plays an important role in calcium homeostasis in the heart muscle. The degree of ATP2A2 inhibition depends on the oligomeric state of PLN. ATP2A2 inhibition is alleviated by PLN phosphorylation. Also inhibits the activity of ATP2A3/SERCA3. Controls intracellular Ca(2+) levels in elongated spermatids and may play a role in germ cell differentiation. In the thalamic reticular nucleus of the brain, plays a role in the regulation of sleep patterns and executive functioning. This chain is Phospholamban, found in Homo sapiens (Human).